A 108-amino-acid chain; its full sequence is Nucleoid-associated protein Bphy_0952 (108 aa).

A disordered region spans residues 87–108 (AQEKMGGMTSGLPLPPGFKLPF). A compositionally biased stretch (pro residues) spans 99–108 (PLPPGFKLPF).

Belongs to the YbaB/EbfC family. In terms of assembly, homodimer.

The protein localises to the cytoplasm. It localises to the nucleoid. Its function is as follows. Binds to DNA and alters its conformation. May be involved in regulation of gene expression, nucleoid organization and DNA protection. The sequence is that of Nucleoid-associated protein Bphy_0952 from Paraburkholderia phymatum (strain DSM 17167 / CIP 108236 / LMG 21445 / STM815) (Burkholderia phymatum).